We begin with the raw amino-acid sequence, 397 residues long: MKNKYYPLRSSMDELSTKNDNEIDLEKGPLPEYNSEDGNTLPPYSENINLKDPKQMGQNITKLFNWNKSTTPPDYDENRLPITDEGNNPPNTHRENHSSGTADNSSPFLIKLIISFTPIFVLNVPAVCYLTYKDALFKDYGKDEWVYFGVWCAICLMSFISLWCFYETWTKAVKVTVIFLAQCVKVTVIFLAQCVKVTAIFSAQCIKVTVISLAKCVKVIAVGLYNSKKDLVVTIWLAWVVICFILFGCVKDGRLNLNKALICSTSSISAALFFILLLVCIPIWTLKHMLFGLFQVLGVQSCVVIVTKGLMYLFDKHIDATGYEIEASSLFVIGNFLFFYEMERPGALKRMPKFIRNGIASFLGGIANAFGGIANAIRGANDNNDIPLGEMEVESEV.

2 disordered regions span residues 1 to 41 (MKNK…GNTL) and 65 to 102 (NWNK…SGTA). The segment covering 11 to 29 (SMDELSTKNDNEIDLEKGP) has biased composition (basic and acidic residues). 9 helical membrane-spanning segments follow: residues 108–128 (FLIK…PAVC), 145–165 (WVYF…LWCF), 175–195 (VTVI…AQCV), 205–225 (CIKV…VGLY), 230–250 (DLVV…FGCV), 266–286 (SSIS…IWTL), 290–310 (LFGL…TKGL), 320–340 (ATGY…LFFY), and 357–377 (NGIA…ANAI).

It belongs to the WTF family. Homomer. Forms protein aggregates. The two isoforms can interact with each other and with themselves. High sequence similarity is required for their interaction.

The protein resides in the spore membrane. It is found in the vacuole membrane. It localises to the ascus epiplasm. Its subcellular location is the cytoplasm. The protein localises to the endoplasmic reticulum membrane. Functionally, promotes unequal transmission of alleles from the parental zygote to progeny spores by acting as poison/antidote system where the poison and antidote proteins are produced from the same locus; the poison component is trans-acting and targets all spores within an ascus whereas the antidote component is spore-specific, leading to poisoning of all progeny that do not inherit the allele. Its function is as follows. Localizes isoform 2 to the vacuole thereby facilitating its degradation. In terms of biological role, forms toxic aggregates that disrupt spore maturation. The protein is Meiotic driver wtf28 of Schizosaccharomyces kambucha (Fission yeast).